The sequence spans 437 residues: Probable exopolygalacturonase C (437 aa).

Residues 1–21 (MLITKTAFLAFLLSSVPLAHG) form the signal peptide. Residues N25, N42, N82, N99, and N149 are each glycosylated (N-linked (GlcNAc...) asparagine). PbH1 repeat units follow at residues 215-236 (GTNI…AVGS) and 238-259 (SHNI…SIGS). D229 serves as the catalytic Proton donor. H253 is a catalytic residue. Residue N269 is glycosylated (N-linked (GlcNAc...) asparagine). PbH1 repeat units lie at residues 270 to 291 (ITNL…RFKS) and 299 to 320 (VKNV…FVTQ). 2 N-linked (GlcNAc...) asparagine glycosylation sites follow: N301 and N311. C386 and C392 form a disulfide bridge. N-linked (GlcNAc...) asparagine glycosylation is found at N428 and N431.

The protein belongs to the glycosyl hydrolase 28 family.

It localises to the secreted. The enzyme catalyses [(1-&gt;4)-alpha-D-galacturonosyl](n) + H2O = alpha-D-galacturonate + [(1-&gt;4)-alpha-D-galacturonosyl](n-1). Specific in hydrolyzing the terminal glycosidic bond of polygalacturonic acid and oligogalacturonates. The chain is Probable exopolygalacturonase C (pgxC) from Aspergillus flavus (strain ATCC 200026 / FGSC A1120 / IAM 13836 / NRRL 3357 / JCM 12722 / SRRC 167).